The chain runs to 619 residues: Serine/threonine-protein kinase pkn1 (619 aa).

In terms of domain architecture, Protein kinase spans Tyr15 to Leu302. Lys21–Asp29 is an ATP binding site. Residue Glu141 is the Proton acceptor of the active site.

This sequence belongs to the protein kinase superfamily. Ser/Thr protein kinase family. In terms of processing, autophosphorylated on serine and threonine residues.

It catalyses the reaction L-seryl-[protein] + ATP = O-phospho-L-seryl-[protein] + ADP + H(+). The catalysed reaction is L-threonyl-[protein] + ATP = O-phospho-L-threonyl-[protein] + ADP + H(+). Together with the serine/threonine kinase PknD, may play a role in the specific interactions with host proteins during intracellular growth. This chain is Serine/threonine-protein kinase pkn1 (pkn1), found in Chlamydia pneumoniae (Chlamydophila pneumoniae).